Reading from the N-terminus, the 202-residue chain is GTP cyclohydrolase-2 (202 aa).

Residue arginine 49–glutamate 53 coordinates GTP. Zn(2+)-binding residues include cysteine 54, cysteine 65, and cysteine 67. Residues glutamine 70, glutamate 92–arginine 94, and threonine 114 contribute to the GTP site. The active-site Proton acceptor is aspartate 126. Catalysis depends on arginine 128, which acts as the Nucleophile. Residues threonine 149 and lysine 154 each contribute to the GTP site.

This sequence belongs to the GTP cyclohydrolase II family. It depends on Zn(2+) as a cofactor.

The catalysed reaction is GTP + 4 H2O = 2,5-diamino-6-hydroxy-4-(5-phosphoribosylamino)-pyrimidine + formate + 2 phosphate + 3 H(+). It functions in the pathway cofactor biosynthesis; riboflavin biosynthesis; 5-amino-6-(D-ribitylamino)uracil from GTP: step 1/4. Functionally, catalyzes the conversion of GTP to 2,5-diamino-6-ribosylamino-4(3H)-pyrimidinone 5'-phosphate (DARP), formate and pyrophosphate. The sequence is that of GTP cyclohydrolase-2 from Shewanella frigidimarina (strain NCIMB 400).